The following is a 304-amino-acid chain: uncharacterized protein (304 aa).

NAD(+)-binding positions include 136-137 (GI), 215-217 (VGR), and D241. R217 is an active-site residue. The active site involves E246. The active-site Proton donor is the H265. Position 265 to 268 (265 to 268 (HTAN)) interacts with NAD(+).

This sequence belongs to the D-isomer specific 2-hydroxyacid dehydrogenase family.

This is an uncharacterized protein from Corynebacterium melassecola.